The chain runs to 201 residues: Protease (201 aa).

Residues H56, D73, and C121 contribute to the active site.

It belongs to the peptidase C5 family. In terms of assembly, interacts with protease cofactor pVI-C; this interaction is necessary for protease activation.

The protein localises to the virion. Its subcellular location is the host nucleus. It carries out the reaction Cleaves proteins of the adenovirus and its host cell at two consensus sites: -Yaa-Xaa-Gly-Gly-|-Xaa- and -Yaa-Xaa-Gly-Xaa-|-Gly- (in which Yaa is Met, Ile or Leu, and Xaa is any amino acid).. Requires DNA and protease cofactor for maximal activation. Inside nascent virions, becomes partially activated by binding to the viral DNA, allowing it to cleave the cofactor that binds to the protease and fully activates it. Actin, like the viral protease cofactor, seems to act as a cofactor in the cleavage of cytokeratin 18 and of actin itself. Functionally, cleaves viral precursor proteins (pTP, pIIIa, pVI, pVII, pVIII, and pX) inside newly assembled particles giving rise to mature virions. Protease complexed to its cofactor slides along the viral DNA to specifically locate and cleave the viral precursors. Mature virions have a weakened organization compared to the unmature virions, thereby facilitating subsequent uncoating. Without maturation, the particle lacks infectivity and is unable to uncoat. Late in adenovirus infection, in the cytoplasm, may participate in the cytoskeleton destruction. Cleaves host cell cytoskeletal keratins K7 and K18. This is Protease from Homo sapiens (Human).